A 608-amino-acid polypeptide reads, in one-letter code: Leucine aminopeptidase 2 (608 aa).

Substrate is bound by residues 134–136 and 269–274; these read QCQ and PYGGME. Residue H298 participates in Zn(2+) binding. E299 acts as the Proton acceptor in catalysis. Residues H302 and E321 each contribute to the Zn(2+) site. Residue Y386 is the Proton donor of the active site.

It belongs to the peptidase M1 family. Requires Zn(2+) as cofactor.

The protein resides in the cytoplasm. It localises to the nucleus. The enzyme catalyses an epoxide + H2O = an ethanediol. In terms of biological role, aminopeptidase that preferentially cleaves di- and tripeptides. Also has low epoxide hydrolase activity (in vitro). Can hydrolyze the epoxide leukotriene LTA(4) but it forms preferentially 5,6-dihydroxy-7,9,11,14-eicosatetraenoic acid rather than the cytokine leukotriene B(4) as the product compared to the homologous mammalian enzyme (in vitro). The polypeptide is Leucine aminopeptidase 2 (Sclerotinia sclerotiorum (strain ATCC 18683 / 1980 / Ss-1) (White mold)).